Here is a 128-residue protein sequence, read N- to C-terminus: Large ribosomal subunit protein uL22 (128 aa).

Belongs to the universal ribosomal protein uL22 family. Part of the 50S ribosomal subunit.

Its function is as follows. This protein binds specifically to 23S rRNA; its binding is stimulated by other ribosomal proteins, e.g. L4, L17, and L20. It is important during the early stages of 50S assembly. It makes multiple contacts with different domains of the 23S rRNA in the assembled 50S subunit and ribosome. Functionally, the globular domain of the protein is located near the polypeptide exit tunnel on the outside of the subunit, while an extended beta-hairpin is found that lines the wall of the exit tunnel in the center of the 70S ribosome. The sequence is that of Large ribosomal subunit protein uL22 from Nitrobacter winogradskyi (strain ATCC 25391 / DSM 10237 / CIP 104748 / NCIMB 11846 / Nb-255).